A 142-amino-acid polypeptide reads, in one-letter code: UPF0102 protein Bcep1808_0248 (142 aa).

It belongs to the UPF0102 family.

The protein is UPF0102 protein Bcep1808_0248 of Burkholderia vietnamiensis (strain G4 / LMG 22486) (Burkholderia cepacia (strain R1808)).